A 310-amino-acid chain; its full sequence is Ribosomal RNA small subunit methyltransferase H (310 aa).

S-adenosyl-L-methionine contacts are provided by residues 35–37 (GGH), aspartate 52, phenylalanine 79, aspartate 100, and glutamine 107.

Belongs to the methyltransferase superfamily. RsmH family.

Its subcellular location is the cytoplasm. The enzyme catalyses cytidine(1402) in 16S rRNA + S-adenosyl-L-methionine = N(4)-methylcytidine(1402) in 16S rRNA + S-adenosyl-L-homocysteine + H(+). In terms of biological role, specifically methylates the N4 position of cytidine in position 1402 (C1402) of 16S rRNA. This chain is Ribosomal RNA small subunit methyltransferase H, found in Anaeromyxobacter sp. (strain Fw109-5).